We begin with the raw amino-acid sequence, 284 residues long: Nucleotide-binding protein NMCC_0698 (284 aa).

ATP is bound at residue 8 to 15; that stretch reads GLSGSGKS. A GTP-binding site is contributed by 58–61; sequence DVRS.

It belongs to the RapZ-like family.

Its function is as follows. Displays ATPase and GTPase activities. This chain is Nucleotide-binding protein NMCC_0698, found in Neisseria meningitidis serogroup C (strain 053442).